The sequence spans 135 residues: Large ribosomal subunit protein uL16m (135 aa).

Belongs to the universal ribosomal protein uL16 family.

Its subcellular location is the mitochondrion. The sequence is that of Large ribosomal subunit protein uL16m (RPL16) from Marchantia polymorpha (Common liverwort).